The chain runs to 162 residues: Transcription elongation factor GreA (162 aa).

Residues 44–69 (SENAEYEAAREKQAFVEARIKHLEDI) adopt a coiled-coil conformation.

Belongs to the GreA/GreB family.

Its function is as follows. Necessary for efficient RNA polymerase transcription elongation past template-encoded arresting sites. The arresting sites in DNA have the property of trapping a certain fraction of elongating RNA polymerases that pass through, resulting in locked ternary complexes. Cleavage of the nascent transcript by cleavage factors such as GreA or GreB allows the resumption of elongation from the new 3'terminus. GreA releases sequences of 2 to 3 nucleotides. The chain is Transcription elongation factor GreA from Rickettsia bellii (strain RML369-C).